The following is a 456-amino-acid chain: N(6)-adenosine-methyltransferase non-catalytic subunit METTL14 (456 aa).

The disordered stretch occupies residues 50-75 (TCRASYDTSAPNAKRKYLDEGETDED). Interaction with METTL3 regions lie at residues 135-136 (RD) and 237-238 (SG). The segment at 245–254 (RVCLRKWGYR) is positively charged region required for RNA-binding. 2 interaction with METTL3 regions span residues 255-258 (RCED) and 278-287 (KAVFQRTKEH). The positively charged region required for RNA-binding stretch occupies residues 297–298 (KR). An interaction with METTL3 region spans residues 308–312 (NVDID). Residues 393-456 (ERLRPKSPPP…GAHRGGFPPR (64 aa)) form a disordered region. Ser-399 is modified (phosphoserine). Residues 409–423 (GGGAPRGGGRGGTSA) show a composition bias toward gly residues. Positions 425–440 (RGRERNRSNFRGERGG) are enriched in basic and acidic residues. Over residues 441-450 (FRGGRGGAHR) the composition is skewed to gly residues.

It belongs to the MT-A70-like family. In terms of assembly, heterodimer; heterodimerizes with METTL3 to form an antiparallel heterodimer that constitutes an active methyltransferase. Component of the WMM complex, a N6-methyltransferase complex composed of a catalytic subcomplex, named MAC, and of an associated subcomplex, named MACOM. The MAC subcomplex is composed of METTL3 and METTL14. The MACOM subcomplex is composed of WTAP, ZC3H13, CBLL1/HAKAI, VIRMA, and, in some cases of RBM15 (RBM15 or RBM15B).

It is found in the nucleus. In terms of biological role, the METTL3-METTL14 heterodimer forms a N6-methyltransferase complex that methylates adenosine residues at the N(6) position of some mRNAs and regulates the circadian clock, differentiation of embryonic stem cells and cortical neurogenesis. In the heterodimer formed with METTL3, METTL14 constitutes the RNA-binding scaffold that recognizes the substrate rather than the catalytic core. N6-methyladenosine (m6A), which takes place at the 5'-[AG]GAC-3' consensus sites of some mRNAs, plays a role in mRNA stability and processing. M6A acts as a key regulator of mRNA stability by promoting mRNA destabilization and degradation. In embryonic stem cells (ESCs), m6A methylation of mRNAs encoding key naive pluripotency-promoting transcripts results in transcript destabilization. M6A regulates spermatogonial differentiation and meiosis and is essential for male fertility and spermatogenesis. M6A also regulates cortical neurogenesis: m6A methylation of transcripts related to transcription factors, neural stem cells, the cell cycle and neuronal differentiation during brain development promotes their destabilization and decay, promoting differentiation of radial glial cells. This chain is N(6)-adenosine-methyltransferase non-catalytic subunit METTL14, found in Homo sapiens (Human).